The sequence spans 233 residues: 5'-methylthioadenosine/S-adenosylhomocysteine nucleosidase (233 aa).

Glu12 functions as the Proton acceptor in the catalytic mechanism. Substrate is bound by residues Gly78, Ile156, and 177–178 (ME). Asp201 acts as the Proton donor in catalysis.

This sequence belongs to the PNP/UDP phosphorylase family. MtnN subfamily.

It catalyses the reaction S-adenosyl-L-homocysteine + H2O = S-(5-deoxy-D-ribos-5-yl)-L-homocysteine + adenine. It carries out the reaction S-methyl-5'-thioadenosine + H2O = 5-(methylsulfanyl)-D-ribose + adenine. The catalysed reaction is 5'-deoxyadenosine + H2O = 5-deoxy-D-ribose + adenine. The protein operates within amino-acid biosynthesis; L-methionine biosynthesis via salvage pathway; S-methyl-5-thio-alpha-D-ribose 1-phosphate from S-methyl-5'-thioadenosine (hydrolase route): step 1/2. Its function is as follows. Catalyzes the irreversible cleavage of the glycosidic bond in both 5'-methylthioadenosine (MTA) and S-adenosylhomocysteine (SAH/AdoHcy) to adenine and the corresponding thioribose, 5'-methylthioribose and S-ribosylhomocysteine, respectively. Also cleaves 5'-deoxyadenosine, a toxic by-product of radical S-adenosylmethionine (SAM) enzymes, into 5-deoxyribose and adenine. This is 5'-methylthioadenosine/S-adenosylhomocysteine nucleosidase from Listeria monocytogenes serotype 4a (strain HCC23).